Here is a 1745-residue protein sequence, read N- to C-terminus: MQLKYMKTLLTPQDGAAKVTCMAWAPNNAKFAVCTIDRVVILYDEQGEKRDRFTTKPADPKYGKKTYVVKSMAFSPDSTKIAVAQTDNIIFVYKIGEEWGDKKVICNKFIQTSAVTSLVWPSEHAIIFGLAEGKVRQANTKTSKSSTIYGTDSYVVSLTSNVSGKGILSGHADGTVVRYFIDDEGSGESQGKLLTHACPPYALAWGTNSIIVAGCDKKIVAYGKEGNVIQTFDYSRDRAEKEFTVAASSPSGQSIVVGSFDRLRVFNWSPRKGTWDESSPKEIPNLYTITALSWKKDGSRLSVGTLCGGVEMFDCCLRRSIYKNKFEMTYVGLSQVIVRNLSTGTRVVLKSQYGYEIDEVKVMGKDQYLVAHTSDTLLLGDLVSNKLSEVAWQGSGGNEKFFFENETVCMIFNAGELALVEYGSNDILGSVRTEFMNPHLISVRLNERRQRGVEDNKKLAYLIDIKTIAIVDLVGGYNLGTISHDSKIDWLELNETGRKLLFRDKKLRLHLYDIESSVKSTMLSFCPYVQWVPGSDVVVAQNRGNLCVWYTIDSPERVTMFPLKGDIVDLERSNGKTEVIVNEGVNSISYTLDEGLIEFGTAIDDGDYYRATAFLETLEMSAETEAMWKTLSKLSLEAQQLHIAERCFAALGDVSKARFLNETNKIADAVAKEYDGDGTDHYQVKARLAMLDKNFKLAEMYYMEQNAVDEVMEMYQELHMWDECIAVAEGKGHPELDNLRRSYYSYLMETNQNEKAAEVKENEGDFTGAVNLYLKAGLPAKAAWLAMSKDELLSSQDIVSRITAALIKGEFYERAGDLFERTRNNQRALECYRKGNAFKKAVDLARVAFPAEVVKLEEVWGDYLVQQKQMDAAINHYIEAGRSIKAIEAAIAARQWKKALHILELQEDRTAAKYYLKIAQYYASVQEFEVAERLFVKGDHIKDAIDMYTQAGRWEQAHKLAVKCMTQEDVSVLYVSRAQELEKEGKYKEAERLFTTVDEPDLAITMYKKNKMYDDMIRLVAVHHKDLLQETHIHLAKELEAESRFQEAEYHYLEGQDWKAAVNMYRVNDMWEEAYRIAKTHGGANAHKQVAYLWAKSLGGEAAVKLLNKFGLLETAIDFAADNYTFDFAFELARLSMKQKIPDIHLKNAMFLEDQGKFNEAEIEFIKAGKPKEAVLMHVHNKDWSNAQRVAEAHDPESVADILVSQAKFCFDQKEFQKAEAFLLRAQRPELAIKYYKDAGMWTDAMRICKDYLPSKLSVLQKEYESEGNWGVEGMIEQAQEWEQTGEYSRAVDCYLKVKDSSNLDLLLKCWMKAAELAIKFLSHDKAVDVSQIVGPRLIQLRKYNEAAELYLNLDLIKNAIDAFIEGEEWNKAKRVAKELDPRLEEYVDKRYKEHLKNQGKVDSLVGVDVVAALDMYAERGQWEKCIDTASKQNFKVLHKYIALYATHLIKEGEVEKVLSLYIQHGVPAYSQNFNIYKRMFQELVNLRDRDCAEAFRMWSDLRDVLLLLCENLTKSSEANSPAHEEFEQMLLVAHYYATRSAAKGIDQLSSVAAKLSISLLRHTELIPADKAFYEAGLAAKAVGWENMAFIFLNRFLDLADGIDEGTLDALDHTDFQDTDIPFEVPVPSRLHVTVEKREEIREWVLTVSMDQRVEQVLPKDERGTYEASLVAASTGIRSLPCVITGYPVLRNKIEFKRPGMAANKDDWNKFLMATKTTHSPECQDVLKFITQWCGGLPSAGYSFH.

10 WD repeats span residues D14 to F53, K64 to K103, I110 to I148, G150 to Q190, T195 to D233, R238 to S278, P284 to K323, S483 to T521, M522 to T559, and D680 to I725. 11 TPR repeats span residues L691–I725, T750–W784, G809–V842, V854–I887, A912–I945, M947–S971, V972–I1004, E1042–Y1075, V1272–D1305, V1328–I1361, and G1407–Y1441.

This sequence belongs to the IFT172 family.

It is found in the cell projection. The protein resides in the cilium. Required for the maintenance and formation of cilia. This Danio rerio (Zebrafish) protein is Intraflagellar transport protein 172 homolog (ift172).